Reading from the N-terminus, the 367-residue chain is Epoxide hydrolase 3 (367 aa).

A helical transmembrane segment spans residues 21–41 (GVFFWVLVYVAALLAAVSYIP). Asp-173 acts as the Nucleophile in catalysis. Residue Tyr-285 is the Proton donor of the active site. Residue His-340 is the Proton acceptor of the active site.

This sequence belongs to the AB hydrolase superfamily. Epoxide hydrolase family.

It localises to the microsome membrane. The catalysed reaction is an epoxide + H2O = an ethanediol. It catalyses the reaction 9,10-epoxyoctadecanoate + H2O = 9,10-dihydroxyoctadecanoate. The enzyme catalyses 9,10-epoxy-(12Z)-octadecenoate + H2O = 9,10-dihydroxy-(12Z)-octadecenoate. It carries out the reaction 8,9-epoxy-(5Z,11Z,14Z)-eicosatrienoate + H2O = 8,9-dihydroxy-(5Z,11Z,14Z)-eicosatrienoate. The catalysed reaction is 11,12-epoxy-(5Z,8Z,14Z)-eicosatrienoate + H2O = 11,12-dihydroxy-(5Z,8Z,14Z)-eicosatrienoate. It catalyses the reaction 14,15-epoxy-(5Z,8Z,11Z)-eicosatrienoate + H2O = 14,15-dihydroxy-(5Z,8Z,11Z)-eicosatrienoate. With respect to regulation, inhibited by 1-(1-acetylpiperidin-4-yl)-3-(4-(trifl uoromethoxy)phenyl)urea (TPAU), 1-cyclohexyl-3-dodecylurea (CDU), 12-(3-adamantan-1-yl-ureido)-dodecanoic acid (AUDA), 1-((3S, 5S, 7S)-adamantan-1-yl)-3-(5-(2-(2-ethoxyethoxy) ethoxy)pentyl)urea (AEPU) and to a lesser extent by 8-(3-((3S, 5S, 7S)-adamantan-1-yl)ureido) octanoic acid (AUOA). Its function is as follows. Catalyzes the hydrolysis of epoxide-containing fatty acids. Active in vitro against epoxyeicosatrienoic acids (EETs) including 8,9-EET, 9,10-EET, 11,12-EET and 14,15-EET and leukotoxin. This is Epoxide hydrolase 3 (ephx3) from Xenopus tropicalis (Western clawed frog).